A 521-amino-acid chain; its full sequence is Cytochrome P450 monooxygenase ABA2 (521 aa).

Residues 15 to 35 (AGHLGMAVTFTILVAFTIHVL) form a helical membrane-spanning segment. N-linked (GlcNAc...) asparagine glycosylation occurs at Asn366. Cys458 lines the heme pocket.

It belongs to the cytochrome P450 family. It depends on heme as a cofactor.

Its subcellular location is the membrane. It participates in hormone biosynthesis. In terms of biological role, cytochrome P450 monooxygenase involved in the biosynthesis of abscisic acid (ABA), a phytohormone that acts antagonistically toward salicylic acid (SA), jasmonic acid (JA) and ethylene (ETH) signaling, to impede plant defense responses. During pathogen-host interaction, ABA plays a dual role in disease severity by increasing plant susceptibility and accelerating pathogenesis in the fungus itself. The first step of the pathway catalyzes the reaction from farnesyl diphosphate to alpha-ionylideneethane performed by the alpha-ionylideneethane synthase ABA3 via a three-step reaction mechanism involving 2 neutral intermediates, beta-farnesene and allofarnesene. The cytochrome P450 monooxygenase ABA1 might then be involved in the conversion of alpha-ionylideneethane to alpha-ionylideneacetic acid. Alpha-ionylideneacetic acid is further converted to abscisic acid in 2 steps involving the cytochrome P450 monooxygenase ABA2 and the short-chain dehydrogenase/reductase ABA4, via the intermediates 1'-deoxy-ABA or 1',4'-trans-diol-ABA, depending on the order of action of these 2 enzymes. ABA2 is responsible for the hydroxylation of carbon atom C-1' and ABA4 might be involved in the oxidation of the C-4' carbon atom. The sequence is that of Cytochrome P450 monooxygenase ABA2 from Pyricularia oryzae (strain 70-15 / ATCC MYA-4617 / FGSC 8958) (Rice blast fungus).